We begin with the raw amino-acid sequence, 141 residues long: MRQRTIVCPLIQNDGAYLLCKMADDRGVFPGQWALSGGGVEPGERIEDALRREIREELGDKLILQKITPWTFSDDVRMKTYADGTKEEIYMIYLIFDCVSANREITINEEFQDFAWVKPQDLAQYDLNVATRKTLSLKGLL.

Residues 1-141 (MRQRTIVCPL…RKTLSLKGLL (141 aa)) enclose the Nudix hydrolase domain. Residues 38 to 59 (GGVEPGERIEDALRREIREELG) carry the Nudix box motif.

This sequence belongs to the Nudix hydrolase family. NudI subfamily. As to quaternary structure, monomer. The cofactor is Mg(2+).

The enzyme catalyses a ribonucleoside 5'-triphosphate + H2O = a ribonucleoside 5'-phosphate + diphosphate + H(+). It carries out the reaction a 2'-deoxyribonucleoside 5'-triphosphate + H2O = a 2'-deoxyribonucleoside 5'-phosphate + diphosphate + H(+). It catalyses the reaction dUTP + H2O = dUMP + diphosphate + H(+). The catalysed reaction is dTTP + H2O = dTMP + diphosphate + H(+). The enzyme catalyses dCTP + H2O = dCMP + diphosphate + H(+). Functionally, catalyzes the hydrolysis of nucleoside triphosphates, with a preference for pyrimidine deoxynucleoside triphosphates (dUTP, dTTP and dCTP). This is Nucleoside triphosphatase NudI from Escherichia fergusonii (strain ATCC 35469 / DSM 13698 / CCUG 18766 / IAM 14443 / JCM 21226 / LMG 7866 / NBRC 102419 / NCTC 12128 / CDC 0568-73).